A 349-amino-acid chain; its full sequence is MDNERQKALDTVIKNMEKSFGKGAVMKLGDNKGRRVSSTSSGSVTVDNALGVGGYPKGRIIEIYGPESSGKTTVALHAIAEVQKNGGVAAFIDAEHALDPVYAQALGVDIDNLYLSQPDHGEQGLEIAEAFVRSGAVDIVVVDSVAALTPKAEIEGEMGDTHVGLQARLMSQALRKLSGAISKSNTTAIFINQIREKVGVMFGNPETTPGGRALKFYSSVRLEVRRAEQLKQGQDIVGNRTKIKVVKNKVAPPFRVAEVDIMYGQGISKEGELIDLGVENDIVDKSGAWYSYNGDRMGQGKENVKNYLKENPQIKEEIDRKLREKLGIFDGDVDENENEDDSPKTLFDE.

65-72 is an ATP binding site; it reads GPESSGKT. Residues 329 to 349 form a disordered region; it reads FDGDVDENENEDDSPKTLFDE. Residues 331–340 are compositionally biased toward acidic residues; the sequence is GDVDENENED.

This sequence belongs to the RecA family.

It localises to the cytoplasm. Its function is as follows. Can catalyze the hydrolysis of ATP in the presence of single-stranded DNA, the ATP-dependent uptake of single-stranded DNA by duplex DNA, and the ATP-dependent hybridization of homologous single-stranded DNAs. It interacts with LexA causing its activation and leading to its autocatalytic cleavage. The sequence is that of Protein RecA from Staphylococcus epidermidis (strain ATCC 35984 / DSM 28319 / BCRC 17069 / CCUG 31568 / BM 3577 / RP62A).